The following is a 448-amino-acid chain: tRNA modification GTPase MnmE (448 aa).

3 residues coordinate (6S)-5-formyl-5,6,7,8-tetrahydrofolate: R21, E80, and K119. A TrmE-type G domain is found at 215-370 (GVKLAIVGRP…LSEEILKKVG (156 aa)). N225 lines the K(+) pocket. GTP is bound by residues 225–230 (NVGKSS), 244–250 (TDIAGTT), and 269–272 (DTAG). S229 lines the Mg(2+) pocket. Residues T244, I246, and T249 each coordinate K(+). T250 contributes to the Mg(2+) binding site. K448 contributes to the (6S)-5-formyl-5,6,7,8-tetrahydrofolate binding site.

This sequence belongs to the TRAFAC class TrmE-Era-EngA-EngB-Septin-like GTPase superfamily. TrmE GTPase family. As to quaternary structure, homodimer. Heterotetramer of two MnmE and two MnmG subunits. K(+) serves as cofactor.

The protein localises to the cytoplasm. In terms of biological role, exhibits a very high intrinsic GTPase hydrolysis rate. Involved in the addition of a carboxymethylaminomethyl (cmnm) group at the wobble position (U34) of certain tRNAs, forming tRNA-cmnm(5)s(2)U34. This is tRNA modification GTPase MnmE from Aquifex aeolicus (strain VF5).